A 411-amino-acid chain; its full sequence is Tyrosine--tRNA ligase (411 aa).

Residue Y34 participates in L-tyrosine binding. The 'HIGH' region motif lies at 39 to 48 (CTATSLHIGS). L-tyrosine-binding residues include Y171 and Q175. Positions 231-235 (KMGKT) match the 'KMSKS' region motif. K234 is an ATP binding site. Residues 345-411 (ISAYELFHEA…GKKRHILVRV (67 aa)) enclose the S4 RNA-binding domain.

This sequence belongs to the class-I aminoacyl-tRNA synthetase family. TyrS type 1 subfamily. In terms of assembly, homodimer.

The protein localises to the cytoplasm. It carries out the reaction tRNA(Tyr) + L-tyrosine + ATP = L-tyrosyl-tRNA(Tyr) + AMP + diphosphate + H(+). In terms of biological role, catalyzes the attachment of tyrosine to tRNA(Tyr) in a two-step reaction: tyrosine is first activated by ATP to form Tyr-AMP and then transferred to the acceptor end of tRNA(Tyr). This Rickettsia felis (strain ATCC VR-1525 / URRWXCal2) (Rickettsia azadi) protein is Tyrosine--tRNA ligase.